The chain runs to 89 residues: Long neurotoxin homolog Pa ID (89 aa).

Residues 1–21 form the signal peptide; the sequence is MKTLLLTLVVVTIMCLDLGYT. 5 disulfide bridges follow: Cys-24–Cys-42, Cys-35–Cys-63, Cys-48–Cys-52, Cys-67–Cys-78, and Cys-79–Cys-84.

Belongs to the three-finger toxin family. Long-chain subfamily. Type II alpha-neurotoxin sub-subfamily. Expressed by the venom gland.

It is found in the secreted. In terms of biological role, binds with high affinity to muscular (alpha-1/CHRNA1) and neuronal (alpha-7/CHRNA7) nicotinic acetylcholine receptor (nAChR) and inhibits acetylcholine from binding to the receptor, thereby impairing neuromuscular and neuronal transmission. This is Long neurotoxin homolog Pa ID from Pseudechis australis (Mulga snake).